The sequence spans 287 residues: tRNA selenocysteine 1-associated protein 1 (287 aa).

2 consecutive RRM domains span residues 3 to 86 and 96 to 175; these read ASLW…YATY and YSLF…VAIP.

It belongs to the RRM TRSPAP family. In terms of assembly, component of the tRNA(Sec) complex composed at least of EEFSEC, SECISBP2, SEPHS1, SEPSECS, TRNAU1AP and tRNA(Sec). Found in a complex with tRNA(Sec). Interacts with SEPSECS. Associates with mRNP and/or polysomes. Found in a complex with EEFSEC, SECISBP2, TRNAU1AP and tRNA(Sec).

The protein localises to the nucleus. It localises to the cytoplasm. Functionally, involved in the early steps of selenocysteine biosynthesis and tRNA(Sec) charging to the later steps resulting in the cotranslational incorporation of selenocysteine into selenoproteins. Stabilizes the SECISBP2, EEFSEC and tRNA(Sec) complex. May be involved in the methylation of tRNA(Sec). Enhances efficiency of selenoproteins synthesis. The polypeptide is tRNA selenocysteine 1-associated protein 1 (TRNAU1AP) (Bos taurus (Bovine)).